Consider the following 209-residue polypeptide: Pyrrolidone-carboxylate peptidase (209 aa).

Residues glutamate 79, cysteine 142, and histidine 164 contribute to the active site.

This sequence belongs to the peptidase C15 family. Homotetramer.

It is found in the cytoplasm. It carries out the reaction Release of an N-terminal pyroglutamyl group from a polypeptide, the second amino acid generally not being Pro.. Its function is as follows. Removes 5-oxoproline from various penultimate amino acid residues except L-proline. The sequence is that of Pyrrolidone-carboxylate peptidase from Saccharolobus islandicus (strain L.S.2.15 / Lassen #1) (Sulfolobus islandicus).